Consider the following 602-residue polypeptide: Aspartate--tRNA(Asp/Asn) ligase (602 aa).

L-aspartate is bound at residue Glu191. Residues 215 to 218 (QLYK) form an aspartate region. Residue Arg237 coordinates L-aspartate. ATP contacts are provided by residues 237 to 239 (RDE) and Gln246. His465 lines the L-aspartate pocket. An ATP-binding site is contributed by Glu499. L-aspartate is bound at residue Arg506. Residue 551–554 (GLDR) coordinates ATP.

The protein belongs to the class-II aminoacyl-tRNA synthetase family. Type 1 subfamily. As to quaternary structure, homodimer.

The protein resides in the cytoplasm. It carries out the reaction tRNA(Asx) + L-aspartate + ATP = L-aspartyl-tRNA(Asx) + AMP + diphosphate. Functionally, aspartyl-tRNA synthetase with relaxed tRNA specificity since it is able to aspartylate not only its cognate tRNA(Asp) but also tRNA(Asn). Reaction proceeds in two steps: L-aspartate is first activated by ATP to form Asp-AMP and then transferred to the acceptor end of tRNA(Asp/Asn). The polypeptide is Aspartate--tRNA(Asp/Asn) ligase (Treponema pallidum (strain Nichols)).